The primary structure comprises 119 residues: Dolichyl-diphosphooligosaccharide--protein glycosyltransferase subunit DAD1 (119 aa).

An N-acetylserine modification is found at serine 2. Residues 2–30 (SASVASVISRFLEEYLSSTPQRLKLLDAY) lie on the Cytoplasmic side of the membrane. Residues 31 to 51 (LLYILLTGALQFGYCLLVGTF) form a helical membrane-spanning segment. The Lumenal segment spans residues 52 to 54 (PFN). A helical membrane pass occupies residues 55–75 (SFLSGFISCVGSFILAGNGSL). Residues 76–81 (RNRSNN) lie on the Cytoplasmic side of the membrane. A helical transmembrane segment spans residues 82-98 (VFTLVRCFSSLVTLFYS). Residues 99–119 (RSPPREVPRGACIALFCERGN) are Lumenal-facing.

The protein belongs to the DAD/OST2 family. As to quaternary structure, component of the oligosaccharyltransferase (OST) complex. OST exists in two different complex forms which contain common core subunits RPN1, RPN2, OST48, OST4, DAD1 and TMEM258, either STT3A or STT3B as catalytic subunits, and form-specific accessory subunits. STT3A complex assembly occurs through the formation of 3 subcomplexes. Subcomplex 1 contains RPN1 and TMEM258, subcomplex 2 contains the STT3A-specific subunits STT3A, DC2/OSTC, and KCP2 as well as the core subunit OST4, and subcomplex 3 contains RPN2, DAD1, and OST48. The STT3A complex can form stable complexes with the Sec61 complex or with both the Sec61 and TRAP complexes.

It localises to the endoplasmic reticulum membrane. It participates in protein modification; protein glycosylation. Subunit of the oligosaccharyl transferase (OST) complex that catalyzes the initial transfer of a defined glycan (Glc(3)Man(9)GlcNAc(2) in eukaryotes) from the lipid carrier dolichol-pyrophosphate to an asparagine residue within an Asn-X-Ser/Thr consensus motif in nascent polypeptide chains, the first step in protein N-glycosylation. N-glycosylation occurs cotranslationally and the complex associates with the Sec61 complex at the channel-forming translocon complex that mediates protein translocation across the endoplasmic reticulum (ER). All subunits are required for a maximal enzyme activity. This is Dolichyl-diphosphooligosaccharide--protein glycosyltransferase subunit DAD1 from Canis lupus familiaris (Dog).